A 140-amino-acid polypeptide reads, in one-letter code: Ribosome maturation factor RimP (140 aa).

Belongs to the RimP family.

Its subcellular location is the cytoplasm. Required for maturation of 30S ribosomal subunits. This chain is Ribosome maturation factor RimP, found in Campylobacter fetus subsp. fetus (strain 82-40).